The primary structure comprises 1551 residues: UDP-glucose:glycoprotein glucosyltransferase 1 (1551 aa).

The signal sequence occupies residues 1 to 42 (MCSRGDANTADAAAARRVTGLRYNMRLLIALALPCLFSLAEA). N-linked (GlcNAc...) asparagine glycosylation is found at Asn269, Asn536, and Asn1228. Positions 1244–1551 (KAEEVKQDKD…QEGSQKHEEL (308 aa)) are glucosyltransferase. A Phosphoserine modification is found at Ser1277. Residues 1531–1551 (KELGTLHTEETQEGSQKHEEL) form a disordered region. The Prevents secretion from ER signature appears at 1548-1551 (HEEL).

Belongs to the glycosyltransferase 8 family. As to quaternary structure, monomer as well as in a tight complex with SELENOF. Interacts with METTL23. Part of a large chaperone multiprotein complex comprising DNAJB11, HSP90B1, HSPA5, HYOU, PDIA2, PDIA4, PDIA6, PPIB, SDF2L1, UGGT1 and very small amounts of ERP29, but not, or at very low levels, CALR nor CANX. It depends on Ca(2+) as a cofactor. Mn(2+) is required as a cofactor.

Its subcellular location is the endoplasmic reticulum lumen. The protein resides in the endoplasmic reticulum-Golgi intermediate compartment. The enzyme catalyses N(4)-(alpha-D-Man-(1-&gt;2)-alpha-D-Man-(1-&gt;2)-alpha-D-Man-(1-&gt;3)-[alpha-D-Man-(1-&gt;2)-alpha-D-Man-(1-&gt;3)-[alpha-D-Man-(1-&gt;2)-alpha-D-Man-(1-&gt;6)]-alpha-D-Man-(1-&gt;6)]-beta-D-Man-(1-&gt;4)-beta-D-GlcNAc-(1-&gt;4)-beta-D-GlcNAc)-L-asparaginyl-[protein] (N-glucan mannose isomer 9A1,2,3B1,2,3) + UDP-alpha-D-glucose = N(4)-(alpha-D-Glc-(1-&gt;3)-alpha-D-Man-(1-&gt;2)-alpha-D-Man-(1-&gt;2)-alpha-D-Man-(1-&gt;3)-[alpha-D-Man-(1-&gt;2)-alpha-D-Man-(1-&gt;3)-[alpha-D-Man-(1-&gt;2)-alpha-D-Man-(1-&gt;6)]-alpha-D-Man-(1-&gt;6)]-beta-D-Man-(1-&gt;4)-beta-D-GlcNAc-(1-&gt;4)-beta-D-GlcNAc)-L-asparaginyl-[protein] + UDP + H(+). It participates in protein modification; protein glycosylation. Recognizes glycoproteins with minor folding defects. Reglucosylates single N-glycans near the misfolded part of the protein, thus providing quality control for protein folding in the endoplasmic reticulum. Reglucosylated proteins are recognized by calreticulin for recycling to the endoplasmic reticulum and refolding or degradation. The polypeptide is UDP-glucose:glycoprotein glucosyltransferase 1 (Uggt1) (Mus musculus (Mouse)).